A 737-amino-acid chain; its full sequence is Lysyl oxidase homolog 2A (737 aa).

The signal sequence occupies residues 1–18 (MAVSSALCIFSLLVLAQA). SRCR domains are found at residues 29–130 (LRLA…VICN), 159–270 (IRPI…VSCV), 294–393 (VRLR…VRCN), and 403–512 (IRLS…VSCS). Intrachain disulfides connect Cys55–Cys119, Cys68–Cys129, Cys99–Cys109, Cys188–Cys259, Cys201–Cys269, Cys235–Cys245, Cys319–Cys382, Cys332–Cys392, and Cys363–Cys373. Asn256 is a glycosylation site (N-linked (GlcNAc...) asparagine). An N-linked (GlcNAc...) asparagine glycan is attached at Asn423. Disulfide bonds link Cys432–Cys498, Cys445–Cys511, and Cys479–Cys489. The segment at 516–718 (PDLVLNAQLV…WTYSCHIGGS (203 aa)) is lysyl-oxidase like. Residues Asp517 and Leu518 each contribute to the Ca(2+) site. Cystine bridges form between Cys541/Cys592, Cys547/Cys662, Cys624/Cys640, and Cys630/Cys652. Cu cation contacts are provided by His593, His595, and His597. Asn611 carries N-linked (GlcNAc...) asparagine glycosylation. A cross-link (lysine tyrosylquinone (Lys-Tyr)) is located at residues 620-656 (KASFCLEDTHCDEGISKRYHCANFGEQGITVGCWDTY). Residue Tyr656 is modified to 2',4',5'-topaquinone. Ca(2+) contacts are provided by Glu689, Asp691, Asn694, and Asn695. Cys699 and Cys713 form a disulfide bridge.

Belongs to the lysyl oxidase family. Cu cation serves as cofactor. Requires lysine tyrosylquinone residue as cofactor. In terms of processing, the lysine tyrosylquinone cross-link (LTQ) is generated by condensation of the epsilon-amino group of a lysine with a topaquinone produced by oxidation of tyrosine.

The protein localises to the secreted. It localises to the extracellular space. The protein resides in the extracellular matrix. Its subcellular location is the basement membrane. It is found in the nucleus. The protein localises to the chromosome. It localises to the endoplasmic reticulum. The enzyme catalyses L-lysyl-[protein] + O2 + H2O = (S)-2-amino-6-oxohexanoyl-[protein] + H2O2 + NH4(+). Mediates the post-translational oxidative deamination of lysine residues on target proteins leading to the formation of deaminated lysine (allysine). Acts as a transcription corepressor and specifically mediates deamination of trimethylated 'Lys-4' of histone H3 (H3K4me3), a specific tag for epigenetic transcriptional activation. Shows no activity against histone H3 when it is trimethylated on 'Lys-9' (H3K9me3) or 'Lys-27' (H3K27me3) or when 'Lys-4' is monomethylated (H3K4me1) or dimethylated (H3K4me2). Also mediates deamination of methylated TAF10, a member of the transcription factor IID (TFIID) complex, which induces release of TAF10 from promoters, leading to inhibition of TFIID-dependent transcription. LOXL2-mediated deamination of TAF10 results in transcriptional repression of genes required for embryonic stem cell pluripotency. Involved in epithelial to mesenchymal transition (EMT) and participates in repression of E-cadherin, probably by mediating deamination of histone H3. When secreted into the extracellular matrix, promotes cross-linking of extracellular matrix proteins by mediating oxidative deamination of peptidyl lysine residues in precursors to fibrous collagen and elastin. Acts as a regulator of sprouting angiogenesis, probably via collagen IV scaffolding. Acts as a regulator of chondrocyte differentiation, probably by regulating expression of factors that control chondrocyte differentiation. Required with loxl2b for correct expression of Sox2 and for neural differentiation. This chain is Lysyl oxidase homolog 2A (loxl2a), found in Danio rerio (Zebrafish).